We begin with the raw amino-acid sequence, 314 residues long: tRNA uridine(34) hydroxylase (314 aa).

Positions 135–229 constitute a Rhodanese domain; that stretch reads SDPDTIVIDT…YLEEVPEEES (95 aa). The Cysteine persulfide intermediate role is filled by Cys189.

It belongs to the TrhO family.

It catalyses the reaction uridine(34) in tRNA + AH2 + O2 = 5-hydroxyuridine(34) in tRNA + A + H2O. In terms of biological role, catalyzes oxygen-dependent 5-hydroxyuridine (ho5U) modification at position 34 in tRNAs. This is tRNA uridine(34) hydroxylase from Agrobacterium fabrum (strain C58 / ATCC 33970) (Agrobacterium tumefaciens (strain C58)).